The primary structure comprises 268 residues: Undecaprenyl-diphosphatase (268 aa).

Helical transmembrane passes span 9-29, 47-67, 83-103, 107-127, 144-164, 184-204, 218-238, and 246-266; these read VILG…TGHL, FDVL…FAKL, FIIG…AAGS, LFLF…AVLL, FPVL…IPGV, AAEF…VYDL, IVAV…KTFL, and FQLF…ALAM.

This sequence belongs to the UppP family.

It is found in the cell inner membrane. It catalyses the reaction di-trans,octa-cis-undecaprenyl diphosphate + H2O = di-trans,octa-cis-undecaprenyl phosphate + phosphate + H(+). Functionally, catalyzes the dephosphorylation of undecaprenyl diphosphate (UPP). Confers resistance to bacitracin. The chain is Undecaprenyl-diphosphatase from Rhodopseudomonas palustris (strain HaA2).